A 99-amino-acid chain; its full sequence is UPF0473 protein SMU_2077c (99 aa).

This sequence belongs to the UPF0473 family.

This Streptococcus mutans serotype c (strain ATCC 700610 / UA159) protein is UPF0473 protein SMU_2077c.